Consider the following 243-residue polypeptide: Purine nucleoside phosphorylase YfiH (243 aa).

Positions 71, 107, and 124 each coordinate Zn(2+).

The protein belongs to the purine nucleoside phosphorylase YfiH/LACC1 family. Homodimer. The cofactor is Cu(2+). Zn(2+) serves as cofactor.

It carries out the reaction adenosine + phosphate = alpha-D-ribose 1-phosphate + adenine. The catalysed reaction is S-methyl-5'-thioadenosine + phosphate = 5-(methylsulfanyl)-alpha-D-ribose 1-phosphate + adenine. The enzyme catalyses inosine + phosphate = alpha-D-ribose 1-phosphate + hypoxanthine. It catalyses the reaction adenosine + H2O + H(+) = inosine + NH4(+). Its function is as follows. Purine nucleoside enzyme that catalyzes the phosphorolysis of adenosine and inosine nucleosides, yielding D-ribose 1-phosphate and the respective free bases, adenine and hypoxanthine. Also catalyzes the phosphorolysis of S-methyl-5'-thioadenosine into adenine and S-methyl-5-thio-alpha-D-ribose 1-phosphate. Also has adenosine deaminase activity. May also act as a polyphenol oxidase: able to oxidize syringaldazine and 2,2'-azino-bis(3-ethylbenzthiazoline-6-sulfonic acid) (ABTS) in vitro. This Escherichia coli (strain K12) protein is Purine nucleoside phosphorylase YfiH.